The following is a 200-amino-acid chain: Methylamine utilization protein MauD (200 aa).

A helical membrane pass occupies residues 4 to 24; it reads FLIASNILLWLAFLGVTVVML. The Thioredoxin domain maps to 49-183; that stretch reads PDIGDAAPEF…LESLLEADRT (135 aa).

It localises to the membrane. The protein operates within one-carbon metabolism; methylamine degradation. Its function is as follows. May be specifically involved in the processing, transport, and/or maturation of the MADH beta-subunit. This chain is Methylamine utilization protein MauD (mauD), found in Paracoccus denitrificans.